The sequence spans 355 residues: CX3C chemokine receptor 1 (355 aa).

At Met-1 to Thr-31 the chain is on the extracellular side. The helical transmembrane segment at Val-32–Ser-59 threads the bilayer. Residues Lys-60 to Tyr-69 are Cytoplasmic-facing. A helical transmembrane segment spans residues Leu-70–Tyr-90. At Leu-91–Lys-103 the chain is on the extracellular side. A disulfide bond links Cys-102 and Cys-175. Residues Phe-104 to Ile-125 form a helical membrane-spanning segment. Residues Asp-126–Thr-142 lie on the Cytoplasmic side of the membrane. The chain crosses the membrane as a helical span at residues Val-143–Phe-167. Over Thr-168 to Thr-195 the chain is Extracellular. The helical transmembrane segment at Asn-196–Ile-215 threads the bilayer. The Cytoplasmic segment spans residues Gln-216–Lys-231. Residues Leu-232–Leu-256 traverse the membrane as a helical segment. The Extracellular segment spans residues Lys-257–Leu-273. Residues Ala-274–Gly-297 form a helical membrane-spanning segment. The Cytoplasmic portion of the chain corresponds to Glu-298–Leu-355. The residue at position 346 (Thr-346) is a Phosphothreonine.

Belongs to the G-protein coupled receptor 1 family. As to quaternary structure, found in a ternary complex with CX3CL1 and ITGAV:ITGB3 or ITGA4:ITGB1. (Microbial infection) Interacts with human respiratory syncytial virus (HRSV) protein G; this interaction modulates host immune response. In terms of assembly, (Microbial infection) Interacts with HIV-1 envelope polyprotein gp160. Post-translationally, this protein is not N-glycosylated which is unusual for G-protein-coupled receptors. As to expression, expressed in lymphoid and neural tissues. Expressed in lymphocyte subsets, such as natural killer (NK) cells, gamma-delta T-cells and terminally differentiated CD8(+) T-cells. Expressed in smooth muscle cells in atherosclerotic plaques.

Its subcellular location is the cell membrane. Functionally, receptor for the C-X3-C chemokine fractalkine (CX3CL1) present on many early leukocyte cells; CX3CR1-CX3CL1 signaling exerts distinct functions in different tissue compartments, such as immune response, inflammation, cell adhesion and chemotaxis. CX3CR1-CX3CL1 signaling mediates cell migratory functions. Responsible for the recruitment of natural killer (NK) cells to inflamed tissues. Acts as a regulator of inflammation process leading to atherogenesis by mediating macrophage and monocyte recruitment to inflamed atherosclerotic plaques, promoting cell survival. Involved in airway inflammation by promoting interleukin 2-producing T helper (Th2) cell survival in inflamed lung. Involved in the migration of circulating monocytes to non-inflamed tissues, where they differentiate into macrophages and dendritic cells. Acts as a negative regulator of angiogenesis, probably by promoting macrophage chemotaxis. Plays a key role in brain microglia by regulating inflammatory response in the central nervous system (CNS) and regulating synapse maturation. Required to restrain the microglial inflammatory response in the CNS and the resulting parenchymal damage in response to pathological stimuli. Involved in brain development by participating in synaptic pruning, a natural process during which brain microglia eliminates extra synapses during postnatal development. Synaptic pruning by microglia is required to promote the maturation of circuit connectivity during brain development. Acts as an important regulator of the gut microbiota by controlling immunity to intestinal bacteria and fungi. Expressed in lamina propria dendritic cells in the small intestine, which form transepithelial dendrites capable of taking up bacteria in order to provide defense against pathogenic bacteria. Required to initiate innate and adaptive immune responses against dissemination of commensal fungi (mycobiota) component of the gut: expressed in mononuclear phagocytes (MNPs) and acts by promoting induction of antifungal IgG antibodies response to confer protection against disseminated C.albicans or C.auris infection. Also acts as a receptor for C-C motif chemokine CCL26, inducing cell chemotaxis. (Microbial infection) Acts as a coreceptor with CD4 for HIV-1 virus envelope protein. Its function is as follows. (Microbial infection) Acts as a coreceptor with CD4 for HIV-1 virus envelope protein. May have more potent HIV-1 coreceptothr activity than isoform 1. In terms of biological role, (Microbial infection) Acts as a coreceptor with CD4 for HIV-1 virus envelope protein. May have more potent HIV-1 coreceptor activity than isoform 1. The sequence is that of CX3C chemokine receptor 1 from Homo sapiens (Human).